Here is a 396-residue protein sequence, read N- to C-terminus: L-lactate dehydrogenase (396 aa).

An FMN hydroxy acid dehydrogenase domain is found at 1 to 380; sequence MIISAASDYR…SGDSLVQELG (380 aa). Substrate is bound at residue Tyr-24. Positions 106 and 127 each coordinate FMN. Tyr-129 provides a ligand contact to substrate. FMN is bound at residue Thr-155. Arg-164 provides a ligand contact to substrate. Lys-251 is an FMN binding site. The active-site Proton acceptor is the His-275. Substrate is bound at residue Arg-278. Residue 306–330 participates in FMN binding; it reads DSGIRNGLDVVRMIALGADTVLLGR.

It belongs to the FMN-dependent alpha-hydroxy acid dehydrogenase family. FMN serves as cofactor.

It is found in the cell inner membrane. The catalysed reaction is (S)-lactate + A = pyruvate + AH2. Catalyzes the conversion of L-lactate to pyruvate. Is coupled to the respiratory chain. The sequence is that of L-lactate dehydrogenase from Salmonella paratyphi C (strain RKS4594).